Reading from the N-terminus, the 508-residue chain is Tryptamine 4-monooxygenase (508 aa).

The first 19 residues, 1-19, serve as a signal peptide directing secretion; that stretch reads MIAVLFSFVIAGCIYYIVS. C439 lines the heme pocket.

This sequence belongs to the cytochrome P450 family. It depends on heme as a cofactor.

The enzyme catalyses tryptamine + AH2 + O2 = 4-hydroxytryptamine + A + H2O. Its pathway is secondary metabolite biosynthesis. Cytochrome P450 monooxygenase; part of the gene cluster that mediates the biosynthesis of psilocybin, a psychotropic tryptamine-derived natural product. The first step in the pathway is the decarboxylation of L-tryptophan to tryptamine by the decarboxylase psiD. 4-hydroxy-L-tryptophan is accepted as substrate by psiD as well. The cytochrome P450 monooxygenase psiH then converts tryptamine to 4-hydroxytryptamine. The kinase psiK catalyzes the 4-O-phosphorylation step by converting 4-hydroxytryptamine into norbaeocystin. The methyltransferase psiM then catalyzes iterative methyl transfer to the amino group of norbaeocystin to yield psilocybin via a monomethylated intermediate, baeocystin. This is Tryptamine 4-monooxygenase from Psilocybe cubensis (Psychedelic mushroom).